Here is a 382-residue protein sequence, read N- to C-terminus: S-adenosylmethionine decarboxylase proenzyme (382 aa).

Residue Phe-32 participates in substrate binding. Catalysis depends on residues Glu-33 and Glu-36. A substrate-binding site is contributed by Leu-87. Ser-90 serves as the catalytic Schiff-base intermediate with substrate; via pyruvic acid. At Ser-90 the chain carries Pyruvic acid (Ser); by autocatalysis. Cys-104 functions as the Proton donor; for catalytic activity in the catalytic mechanism. Residue Phe-248 coordinates substrate. Catalysis depends on proton acceptor; for processing activity residues Ser-254 and His-267. Glu-271 lines the substrate pocket.

It belongs to the eukaryotic AdoMetDC family. In terms of assembly, heterotetramer of two alpha and two beta chains. Pyruvate is required as a cofactor. Post-translationally, is synthesized initially as an inactive proenzyme. Formation of the active enzyme involves a self-maturation process in which the active site pyruvoyl group is generated from an internal serine residue via an autocatalytic post-translational modification. Two non-identical subunits are generated from the proenzyme in this reaction, and the pyruvate is formed at the N-terminus of the alpha chain, which is derived from the carboxyl end of the proenzyme. The post-translation cleavage follows an unusual pathway, termed non-hydrolytic serinolysis, in which the side chain hydroxyl group of the serine supplies its oxygen atom to form the C-terminus of the beta chain, while the remainder of the serine residue undergoes an oxidative deamination to produce ammonia and the pyruvoyl group blocking the N-terminus of the alpha chain.

The catalysed reaction is S-adenosyl-L-methionine + H(+) = S-adenosyl 3-(methylsulfanyl)propylamine + CO2. Its pathway is amine and polyamine biosynthesis; S-adenosylmethioninamine biosynthesis; S-adenosylmethioninamine from S-adenosyl-L-methionine: step 1/1. The protein is S-adenosylmethionine decarboxylase proenzyme of Leishmania donovani.